The primary structure comprises 368 residues: 4-hydroxy-3-methylbut-2-en-1-yl diphosphate synthase (flavodoxin) (368 aa).

[4Fe-4S] cluster contacts are provided by C271, C274, C306, and E313.

This sequence belongs to the IspG family. [4Fe-4S] cluster serves as cofactor.

The enzyme catalyses (2E)-4-hydroxy-3-methylbut-2-enyl diphosphate + oxidized [flavodoxin] + H2O + 2 H(+) = 2-C-methyl-D-erythritol 2,4-cyclic diphosphate + reduced [flavodoxin]. The protein operates within isoprenoid biosynthesis; isopentenyl diphosphate biosynthesis via DXP pathway; isopentenyl diphosphate from 1-deoxy-D-xylulose 5-phosphate: step 5/6. In terms of biological role, converts 2C-methyl-D-erythritol 2,4-cyclodiphosphate (ME-2,4cPP) into 1-hydroxy-2-methyl-2-(E)-butenyl 4-diphosphate. The sequence is that of 4-hydroxy-3-methylbut-2-en-1-yl diphosphate synthase (flavodoxin) from Histophilus somni (strain 129Pt) (Haemophilus somnus).